A 219-amino-acid chain; its full sequence is Protein YNG1 (219 aa).

The segment at 155-204 (EVYCFCRNVSYGPMVACDNPACPFEWFHYGCVGLKQAPKGKWYCSKDCKE) adopts a PHD-type; degenerate zinc-finger fold. The Zn(2+) site is built by Cys158, Cys160, Cys171, Cys176, His182, Cys185, Cys198, and Cys202.

This sequence belongs to the ING family. In terms of assembly, component of the NuA3 histone acetyltransferase (HAT) complex. The NuA3 HAT complex has 2 functionally distinct forms that participate in transcription. The NuA3a HAT complex is composed of at least NTO1, SAS3, TAF14, YNG1 and EAF6. The NuA3b HAT complex contains an additional subunit, PDP3. Interacts with H3K4me3 and to a lesser extent with H3K4me2.

The protein localises to the nucleus. Histone-binding component of the NuA3a histone acetyltransferase complex. Targets the NuA3a HAT complex via histone H3K4me3 to facilitate transcription initiation at promoter regions. SAS3 then acetylates H3K14, leading to transcription initiation at a subset of genes. YNG1 is required for the HAT activity of NuA3 but not for its integrity. Mediates the interaction of SAS3 with nucleosomes. This Saccharomyces cerevisiae (strain ATCC 204508 / S288c) (Baker's yeast) protein is Protein YNG1 (YNG1).